We begin with the raw amino-acid sequence, 695 residues long: MRSSKIRCPGAIRVGTLVTAFGCLPHVAFAAAREAPPVTPEVLVRLADIGTMSASETTPLLSLSPDGRYVAFQVRQADPVTNLNVFRMVVKATDGATDAIDVDVGGEYLFWTIPSWGYARNAPSGANLTIQPRWSPSGTHLAYLRQDQGRVRVWRASVKGEGASPVIEDAYDIEDVQWLDDNTLIYSGRPGFVEAEAEIEREGRRGWVYDERFHPLTGARPRVLEPISIVYQVLDLKTGTRRAATPTEVARLREKPDPLRAMVGRTTFSVSRTDPQNINAPTTLVARRGEGEPVRCDEEACQNITRMWGDETANVLYFLRREGWASNEMALYRMPADALKPVRIWHATGLLQGCERQAKRLICAQESALQPRRLVTLNLTSGQMSPLYDPNPDLSRYRLPKVERLTLRNRNGIEVFSDLVLPPDYQLGTRLPLVIVQYSSRGFLRGGTGDENPILPLATAGFAVLSFHSPRSEASYQRFTSPIAQSKAEYSNWRNRWNILHTLEDLIDDLDRRGVIDPARVGLTGLSDGATTVHFGLINSHRFAAAVTSSCCTDSFTASVMNGPRISGALKAYGIETDQADDGPFWAATSFVVNASRLDTPLLIQSADEEYLGALPGFTALQQARKPVELIIYPNEHHVKWQPAHRLAVYNRTIDWFRFWLMDQSDPAPDKAAQYDRWRALRALRQKSPSPTPAP.

An N-terminal signal peptide occupies residues 1–30 (MRSSKIRCPGAIRVGTLVTAFGCLPHVAFA). 2 cysteine pairs are disulfide-bonded: Cys-296/Cys-301 and Cys-354/Cys-363. The Nucleophile role is filled by Ser-527. Cys-551 and Cys-552 are oxidised to a cystine. Residues Glu-610 and His-638 each act as charge relay system in the active site.

The protein resides in the cytoplasm. In terms of biological role, lasso peptide isopeptidase that specifically hydrolyzes Astexin-2 and Astexin-3, converting them to linear peptides. Has only a few specific contacts with substrates, because it recognizes Astexin knotted structure (principally the loop structure). Its binding to lasso peptides opens them to expose the isopeptide bonds for hydrolysis. The protein is Lasso peptide isopeptidase AtxE2 of Asticcacaulis excentricus (strain ATCC 15261 / DSM 4724 / KCTC 12464 / NCIMB 9791 / VKM B-1370 / CB 48).